A 525-amino-acid polypeptide reads, in one-letter code: GMP synthase [glutamine-hydrolyzing] (525 aa).

The Glutamine amidotransferase type-1 domain maps to 8 to 207 (KILILDFGSQ…ALDICGCAAN (200 aa)). Cys85 serves as the catalytic Nucleophile. Catalysis depends on residues His181 and Glu183. In terms of domain architecture, GMPS ATP-PPase spans 208-400 (WKPSSIIEDA…LGLPYNMLYR (193 aa)). 235–241 (SGGVDSS) is an ATP binding site.

In terms of assembly, homodimer.

The catalysed reaction is XMP + L-glutamine + ATP + H2O = GMP + L-glutamate + AMP + diphosphate + 2 H(+). It functions in the pathway purine metabolism; GMP biosynthesis; GMP from XMP (L-Gln route): step 1/1. Catalyzes the synthesis of GMP from XMP. The chain is GMP synthase [glutamine-hydrolyzing] from Shewanella oneidensis (strain ATCC 700550 / JCM 31522 / CIP 106686 / LMG 19005 / NCIMB 14063 / MR-1).